Here is a 140-residue protein sequence, read N- to C-terminus: Large ribosomal subunit protein uL16 (140 aa).

This sequence belongs to the universal ribosomal protein uL16 family. As to quaternary structure, part of the 50S ribosomal subunit.

Functionally, binds 23S rRNA and is also seen to make contacts with the A and possibly P site tRNAs. In Syntrophus aciditrophicus (strain SB), this protein is Large ribosomal subunit protein uL16.